Here is a 307-residue protein sequence, read N- to C-terminus: Aspartate carbamoyltransferase catalytic subunit (307 aa).

2 residues coordinate carbamoyl phosphate: arginine 55 and threonine 56. Position 85 (lysine 85) interacts with L-aspartate. Carbamoyl phosphate-binding residues include arginine 106, histidine 134, and glutamine 137. Arginine 167 and arginine 228 together coordinate L-aspartate. Leucine 266 and proline 267 together coordinate carbamoyl phosphate.

It belongs to the aspartate/ornithine carbamoyltransferase superfamily. ATCase family. Heterododecamer (2C3:3R2) of six catalytic PyrB chains organized as two trimers (C3), and six regulatory PyrI chains organized as three dimers (R2).

The enzyme catalyses carbamoyl phosphate + L-aspartate = N-carbamoyl-L-aspartate + phosphate + H(+). It functions in the pathway pyrimidine metabolism; UMP biosynthesis via de novo pathway; (S)-dihydroorotate from bicarbonate: step 2/3. Functionally, catalyzes the condensation of carbamoyl phosphate and aspartate to form carbamoyl aspartate and inorganic phosphate, the committed step in the de novo pyrimidine nucleotide biosynthesis pathway. This is Aspartate carbamoyltransferase catalytic subunit from Tolumonas auensis (strain DSM 9187 / NBRC 110442 / TA 4).